Here is a 356-residue protein sequence, read N- to C-terminus: tRNA-splicing endonuclease subunit SEN2 (356 aa).

Residues Tyr268, His276, and Lys307 contribute to the active site.

It belongs to the tRNA-intron endonuclease family. Heterotetramer composed of SEN2, SEN15, SEN34 and SEN54. Interacts directly with SEN54.

The catalysed reaction is pretRNA = a 3'-half-tRNA molecule with a 5'-OH end + a 5'-half-tRNA molecule with a 2',3'-cyclic phosphate end + an intron with a 2',3'-cyclic phosphate and a 5'-hydroxyl terminus.. Its function is as follows. Constitutes one of the two catalytic subunit of the tRNA-splicing endonuclease complex, a complex responsible for identification and cleavage of the splice sites in pre-tRNA. It cleaves pre-tRNA at the 5'- and 3'-splice sites to release the intron. The products are an intron and two tRNA half-molecules bearing 2',3'-cyclic phosphate and 5'-OH termini. There are no conserved sequences at the splice sites, but the intron is invariably located at the same site in the gene, placing the splice sites an invariant distance from the constant structural features of the tRNA body. This subunit may anchor the endonuclease complex to the nuclear membrane. Probably carries the active site for 5'-splice site cleavage. The protein is tRNA-splicing endonuclease subunit SEN2 (SEN2) of Eremothecium gossypii (strain ATCC 10895 / CBS 109.51 / FGSC 9923 / NRRL Y-1056) (Yeast).